The sequence spans 238 residues: Ribonuclease PH (238 aa).

Phosphate is bound by residues arginine 86 and 124 to 126; that span reads GTR.

The protein belongs to the RNase PH family. As to quaternary structure, homohexameric ring arranged as a trimer of dimers.

The enzyme catalyses tRNA(n+1) + phosphate = tRNA(n) + a ribonucleoside 5'-diphosphate. Its function is as follows. Phosphorolytic 3'-5' exoribonuclease that plays an important role in tRNA 3'-end maturation. Removes nucleotide residues following the 3'-CCA terminus of tRNAs; can also add nucleotides to the ends of RNA molecules by using nucleoside diphosphates as substrates, but this may not be physiologically important. Probably plays a role in initiation of 16S rRNA degradation (leading to ribosome degradation) during starvation. In Brucella anthropi (strain ATCC 49188 / DSM 6882 / CCUG 24695 / JCM 21032 / LMG 3331 / NBRC 15819 / NCTC 12168 / Alc 37) (Ochrobactrum anthropi), this protein is Ribonuclease PH.